The primary structure comprises 171 residues: MEEEMSNRRVSNRTRKVATKMAAALTSNDNRTQAAIARLEALENDNGAIEVIDLNDDEEASLDEDDDLGYLQKKQHKGSKRKTRQAKALEARKAPKSFLELLQEANLESLPSHVPTYLKAAVGPPSSSSRRYFCSVCGYIAGYNCCLCGMRFCSIRCQNIHKDTRCQKFVA.

Residues 63 to 87 (DEDDDLGYLQKKQHKGSKRKTRQAK) form a disordered region. Residues 73–85 (KKQHKGSKRKTRQ) show a composition bias toward basic residues. Positions 134, 137, 145, 148, 153, 157, 161, and 166 each coordinate Zn(2+). Residues 134–166 (CSVCGYIAGYNCCLCGMRFCSIRCQNIHKDTRC) form an HIT-type zinc finger.

This sequence belongs to the ZNHIT1 family. As to quaternary structure, homodimer. Component of the SWR1 chromatin-remodeling complex composed of at least ARP6/ESD1/SUF3, PIE1, SWC6, SWC2 and H2AZs (HTA8, HTA9, HTA11). Interacts directly with ARP6, PIE1 and SWC2. Interacts with FLX and SUF4, two component of the transcription activator complex FRI-C, and with ASHH2 and TAF14. As to expression, expressed in root, lateral root primordia, shoot apex, leaves, stems, inflorescences, flowers, axillary buds, developing siliques and premature seeds.

The protein localises to the nucleus speckle. Its subcellular location is the nucleus. Component of the SWR1 complex which mediates the ATP-dependent exchange of histone H2A for the H2A variant H2A.F/Z leading to transcriptional regulation of selected genes (e.g. FLC) by chromatin remodeling. Coodinates SWR1-C, FRI-C (FLC transcription activator complex), histone methyltransferase and general transcription factors. Represses flowering by positively regulating FLC and MAF4. Binds to the promoter region of FLC chromatin. This is SWR1 complex subunit 6 (SWC6) from Arabidopsis thaliana (Mouse-ear cress).